Reading from the N-terminus, the 455-residue chain is Enolase (455 aa).

Gln-166 serves as a coordination point for (2R)-2-phosphoglycerate. Catalysis depends on Glu-208, which acts as the Proton donor. 3 residues coordinate Mg(2+): Asp-249, Glu-311, and Asp-338. Positions 363, 392, 393, and 414 each coordinate (2R)-2-phosphoglycerate. Lys-363 (proton acceptor) is an active-site residue.

It belongs to the enolase family. Mg(2+) is required as a cofactor.

The protein resides in the cytoplasm. It localises to the secreted. It is found in the cell surface. The enzyme catalyses (2R)-2-phosphoglycerate = phosphoenolpyruvate + H2O. It functions in the pathway carbohydrate degradation; glycolysis; pyruvate from D-glyceraldehyde 3-phosphate: step 4/5. Its function is as follows. Catalyzes the reversible conversion of 2-phosphoglycerate (2-PG) into phosphoenolpyruvate (PEP). It is essential for the degradation of carbohydrates via glycolysis. The protein is Enolase of Mycoplasma mobile (strain ATCC 43663 / 163K / NCTC 11711) (Mesomycoplasma mobile).